A 328-amino-acid polypeptide reads, in one-letter code: C-type lectin domain family 11 member A (328 aa).

The N-terminal stretch at 1 to 21 is a signal peptide; that stretch reads MQAAWLLGALLVPHLLSFGHG. The tract at residues 58 to 111 is disordered; it reads PTGVGNKDNLAENSEGKEVWEATETQGEEEEEETTTTPSSSPTPFPSPSPTSED. The region spanning 188–325 is the C-type lectin domain; it reads LGHKCFLLSR…CERRLYFVCE (138 aa). Intrachain disulfides connect C209–C324 and C301–C316.

O-glycosylated. Probably sulfated on the O-glycans.

Its subcellular location is the cytoplasm. The protein localises to the secreted. Promotes osteogenesis by stimulating the differentiation of mesenchymal progenitors into mature osteoblasts. Important for repair and maintenance of adult bone. This chain is C-type lectin domain family 11 member A (Clec11a), found in Rattus norvegicus (Rat).